The chain runs to 176 residues: Envelope protein 167 (176 aa).

A topological domain (intravirion) is located at residue Met1. Residues 2 to 22 form a helical membrane-spanning segment; the sequence is YLVLLIAIILFITIILVIFLI. Topologically, residues 23–176 are virion surface; sequence SGLFYPEQNP…AVMAIPRKVL (154 aa).

It belongs to the asfivirus envelope protein p22 family.

Its subcellular location is the virion membrane. It localises to the host cell membrane. The chain is Envelope protein 167 from African swine fever virus (isolate Warthog/Namibia/Wart80/1980) (ASFV).